Consider the following 295-residue polypeptide: Pyridoxal 5'-phosphate synthase subunit PdxS (295 aa).

D-ribose 5-phosphate is bound at residue Asp-25. Lys-82 (schiff-base intermediate with D-ribose 5-phosphate) is an active-site residue. Gly-154 contacts D-ribose 5-phosphate. Residue Arg-166 participates in D-glyceraldehyde 3-phosphate binding. Residues Gly-215 and 236 to 237 (GS) contribute to the D-ribose 5-phosphate site.

It belongs to the PdxS/SNZ family. In terms of assembly, in the presence of PdxT, forms a dodecamer of heterodimers.

The enzyme catalyses aldehydo-D-ribose 5-phosphate + D-glyceraldehyde 3-phosphate + L-glutamine = pyridoxal 5'-phosphate + L-glutamate + phosphate + 3 H2O + H(+). It participates in cofactor biosynthesis; pyridoxal 5'-phosphate biosynthesis. Functionally, catalyzes the formation of pyridoxal 5'-phosphate from ribose 5-phosphate (RBP), glyceraldehyde 3-phosphate (G3P) and ammonia. The ammonia is provided by the PdxT subunit. Can also use ribulose 5-phosphate and dihydroxyacetone phosphate as substrates, resulting from enzyme-catalyzed isomerization of RBP and G3P, respectively. In Staphylococcus saprophyticus subsp. saprophyticus (strain ATCC 15305 / DSM 20229 / NCIMB 8711 / NCTC 7292 / S-41), this protein is Pyridoxal 5'-phosphate synthase subunit PdxS.